We begin with the raw amino-acid sequence, 382 residues long: UDP-4-amino-4-deoxy-L-arabinose--oxoglutarate aminotransferase (382 aa).

N6-(pyridoxal phosphate)lysine is present on lysine 183.

The protein belongs to the DegT/DnrJ/EryC1 family. ArnB subfamily. Homodimer. The cofactor is pyridoxal 5'-phosphate.

It catalyses the reaction UDP-4-amino-4-deoxy-beta-L-arabinose + 2-oxoglutarate = UDP-beta-L-threo-pentopyranos-4-ulose + L-glutamate. It functions in the pathway nucleotide-sugar biosynthesis; UDP-4-deoxy-4-formamido-beta-L-arabinose biosynthesis; UDP-4-deoxy-4-formamido-beta-L-arabinose from UDP-alpha-D-glucuronate: step 2/3. It participates in bacterial outer membrane biogenesis; lipopolysaccharide biosynthesis. Its function is as follows. Catalyzes the conversion of UDP-4-keto-arabinose (UDP-Ara4O) to UDP-4-amino-4-deoxy-L-arabinose (UDP-L-Ara4N). The modified arabinose is attached to lipid A and is required for resistance to polymyxin and cationic antimicrobial peptides. This is UDP-4-amino-4-deoxy-L-arabinose--oxoglutarate aminotransferase from Pseudomonas aeruginosa (strain LESB58).